We begin with the raw amino-acid sequence, 215 residues long: Orotate phosphoribosyltransferase (215 aa).

Lys26 lines the 5-phospho-alpha-D-ribose 1-diphosphate pocket. 34–35 (FF) lines the orotate pocket. Residues 72-73 (YK), Arg99, Lys100, Lys103, His105, and 125-133 (DDVISSGIS) contribute to the 5-phospho-alpha-D-ribose 1-diphosphate site. Residues Ser129 and Arg157 each coordinate orotate.

The protein belongs to the purine/pyrimidine phosphoribosyltransferase family. PyrE subfamily. Homodimer. Requires Mg(2+) as cofactor.

The enzyme catalyses orotidine 5'-phosphate + diphosphate = orotate + 5-phospho-alpha-D-ribose 1-diphosphate. It functions in the pathway pyrimidine metabolism; UMP biosynthesis via de novo pathway; UMP from orotate: step 1/2. Catalyzes the transfer of a ribosyl phosphate group from 5-phosphoribose 1-diphosphate to orotate, leading to the formation of orotidine monophosphate (OMP). This chain is Orotate phosphoribosyltransferase, found in Halorhodospira halophila (strain DSM 244 / SL1) (Ectothiorhodospira halophila (strain DSM 244 / SL1)).